Here is a 317-residue protein sequence, read N- to C-terminus: tRNA dimethylallyltransferase (317 aa).

An ATP-binding site is contributed by 18–25 (GPTATGKT). 20–25 (TATGKT) is a binding site for substrate. Interaction with substrate tRNA regions lie at residues 43–46 (DSAL), 167–171 (QRIQR), and 281–288 (KRQITWLR).

It belongs to the IPP transferase family. Monomer. Mg(2+) serves as cofactor.

It catalyses the reaction adenosine(37) in tRNA + dimethylallyl diphosphate = N(6)-dimethylallyladenosine(37) in tRNA + diphosphate. Functionally, catalyzes the transfer of a dimethylallyl group onto the adenine at position 37 in tRNAs that read codons beginning with uridine, leading to the formation of N6-(dimethylallyl)adenosine (i(6)A). This chain is tRNA dimethylallyltransferase, found in Alkalilimnicola ehrlichii (strain ATCC BAA-1101 / DSM 17681 / MLHE-1).